The primary structure comprises 222 residues: DUF1769 family protein (222 aa).

It belongs to the UPF0590 family.

Its subcellular location is the cytoplasm. The protein resides in the nucleus. The polypeptide is DUF1769 family protein (Schizosaccharomyces pombe (strain 972 / ATCC 24843) (Fission yeast)).